We begin with the raw amino-acid sequence, 652 residues long: Small ribosomal subunit protein mS39 (652 aa).

Residues 1 to 37 (MYLSRQLRLLPRANIACSLSSSGAHYTTAAPAEDAPI) constitute a mitochondrion transit peptide. PPR repeat units lie at residues 129–163 (DSVVDETSLAQLISQGELKDAVLVYNLLEQKGNPI), 225–259 (TPQSYASLIRGMAKYLQCERAYALLQEAGEKQVQL), 260–299 (DTNTFNSVIEIVSFLKDTAEQRWQLCKDLLNEMSQQKLRP), 300–338 (NLGTLNAVLQCISTFGNFKVARAAALQALPEFKQLGVNP), and 547–581 (TGQMLGDILTLLVRGGSYEKATEVFAHIDKNQHRI).

Belongs to the mitochondrion-specific ribosomal protein mS39 family.

The protein resides in the mitochondrion. Its function is as follows. Mitochondrial protein that may have a role in mitochondrial translation. Essential for larval development. This Drosophila melanogaster (Fruit fly) protein is Small ribosomal subunit protein mS39.